The sequence spans 229 residues: Trypsin (229 aa).

Residues 1 to 7 constitute a propeptide, activation peptide; that stretch reads APDDDDK. Residues 8 to 227 form the Peptidase S1 domain; sequence IVGGYECPKH…YVSWIHETIA (220 aa). 6 cysteine pairs are disulfide-bonded: C14–C143, C32–C48, C116–C216, C123–C189, C154–C168, and C179–C203. H47 (charge relay system) is an active-site residue. Ca(2+) contacts are provided by E59 and E69. The active-site Charge relay system is D91. S183 serves as the catalytic Charge relay system.

It belongs to the peptidase S1 family. The cofactor is Ca(2+).

Its subcellular location is the secreted. It is found in the extracellular space. The catalysed reaction is Preferential cleavage: Arg-|-Xaa, Lys-|-Xaa.. The sequence is that of Trypsin from Squalus acanthias (Spiny dogfish).